The chain runs to 725 residues: MAMAMSDSGASRLRRQLESGGFEARLYVKQLSQQSDGDRDLQEHRQRIQALAEETAQNLKRNVYQNYRQFIETAREISYLESEMYQLSHLLTEQKSSLESIPLTLLPAAAAAGAAAASGGEEGGGGAGGRDQLRGQTGFFPSPGGASRDGSGPGEEGKQRTLTTLLEKVEGCRHLLETPGQYLVYNGDLVEYEADHMAQLQRVHGFLMNDCLLVATWLPQRRGMYRYNALYPLDGLAVVNVKDNPPMKDMFKLLMFPESRIFQAENAKIKREWLEVLEETKRALSEKRRREQEEAAAPRGPPQVTPKASNPFEDEDDDEPTVPEIEEEKVDLSMEWIQELPEDLDVCIAQRDFEGAVDLLDKLNHYLEDKPSPPPVKELRARVDERVRQLTEVLVFELSPDRSLRGGPKATRRAVSQLIRLGQCTKACELFLRNRAAAVHTAIRQLRIEGATLLYIHKLCHVFFTSLLETAREFETDFAGTDSGCYSAFVVWARSAMGMFVDAFSKQVFDSKESLSTAAECVRVAKEHCQQLGDIGLDLTFIVHALLVKDIQGALHSYKEIIIEATKHRNSEEMWRRMNLMTPEALGKLKEEMKSCGVSNFEQYTGDDCWVNLSYTVVAFTKQTMGFLEEALKLYFPELHMVLLESLVEIILVAVQHVDYSLRCEQDPEKKAFIRQNASFLYETVLPVVEKRFEEGVGKPAKQLQDLRNASRLIRVNPESTTSVV.

At serine 19 the chain carries Phosphoserine. The interval 116–159 (AASGGEEGGGGAGGRDQLRGQTGFFPSPGGASRDGSGPGEEGKQ) is disordered. Over residues 120–129 (GEEGGGGAGG) the composition is skewed to gly residues. Residues 182 to 282 (YLVYNGDLVE…WLEVLEETKR (101 aa)) enclose the PH domain. The tract at residues 285-322 (SEKRRREQEEAAAPRGPPQVTPKASNPFEDEDDDEPTV) is disordered. A compositionally biased stretch (acidic residues) spans 312–322 (FEDEDDDEPTV).

Belongs to the EXO84 family. The exocyst complex is composed of EXOC1, EXOC2, EXOC3, EXOC4, EXOC5, EXOC6, EXOC7 and EXOC8. Interacts (via PH domain) with GTP-bound RALA and RALB. Interacts with SH3BP1; required for the localization of both SH3BP1 and the exocyst to the leading edge of migrating cells.

It localises to the cytoplasm. The protein localises to the perinuclear region. Its subcellular location is the cell projection. The protein resides in the growth cone. Component of the exocyst complex involved in the docking of exocytic vesicles with fusion sites on the plasma membrane. The protein is Exocyst complex component 8 (EXOC8) of Bos taurus (Bovine).